Reading from the N-terminus, the 478-residue chain is MTGNTNAGAPRTLYDKIFDAHVVERSDDGTCILYIDRHLVHEVTSPQAFEGLRMAGRKVRRPDQTIAVPDHNVPTTPDRVNGIENPEGRIQVAELDKNAREFGLNYYPMSDIRQGIVHIVGPEQGWTLPGMTVVCGDSHTATHGAFGALAHGIGTSEVEHVLATQTLIQKKSRNMKVEITGKLRPGVTAKDITLSVIGATGTAGGTGYVIEYCGEAIRDLSMEGRMTVCNMAIEGGARAGLIAPDEKTFEYVKGRPHAPKGAAWEAAQAWWKTLFSDEGAHWDKVVTIRGEDIAPVVTWGTSPEDVLPITGKVPAPEDFEGGKVEAARRSLDYMGLKPGTPLNEIRIDAVFIGSCTNGRIEDLRAAAGILKGHKLAPGVRGMVVPGSGLVRMQAEEEGLDNIFIDAGFEWRLAGCSMCLGMNPDQLAPGERCAATSNRNFEGRMGRGGRTHLMSPVMAAAAGIKGHLTDVRELLAETV.

3 residues coordinate [4Fe-4S] cluster: Cys355, Cys415, and Cys418.

The protein belongs to the aconitase/IPM isomerase family. LeuC type 1 subfamily. As to quaternary structure, heterodimer of LeuC and LeuD. It depends on [4Fe-4S] cluster as a cofactor.

The enzyme catalyses (2R,3S)-3-isopropylmalate = (2S)-2-isopropylmalate. It participates in amino-acid biosynthesis; L-leucine biosynthesis; L-leucine from 3-methyl-2-oxobutanoate: step 2/4. Its function is as follows. Catalyzes the isomerization between 2-isopropylmalate and 3-isopropylmalate, via the formation of 2-isopropylmaleate. The sequence is that of 3-isopropylmalate dehydratase large subunit from Paracoccus denitrificans (strain Pd 1222).